The primary structure comprises 302 residues: 4-hydroxy-tetrahydrodipicolinate synthase (302 aa).

Thr-56 contacts pyruvate. The Proton donor/acceptor role is filled by Tyr-145. Lys-173 acts as the Schiff-base intermediate with substrate in catalysis. Pyruvate is bound at residue Val-215.

The protein belongs to the DapA family. Homotetramer; dimer of dimers.

Its subcellular location is the cytoplasm. It carries out the reaction L-aspartate 4-semialdehyde + pyruvate = (2S,4S)-4-hydroxy-2,3,4,5-tetrahydrodipicolinate + H2O + H(+). The protein operates within amino-acid biosynthesis; L-lysine biosynthesis via DAP pathway; (S)-tetrahydrodipicolinate from L-aspartate: step 3/4. Functionally, catalyzes the condensation of (S)-aspartate-beta-semialdehyde [(S)-ASA] and pyruvate to 4-hydroxy-tetrahydrodipicolinate (HTPA). In Prochlorococcus marinus (strain MIT 9515), this protein is 4-hydroxy-tetrahydrodipicolinate synthase.